The primary structure comprises 226 residues: Ribonuclease HII (226 aa).

In terms of domain architecture, RNase H type-2 spans 29–220 (GPVAGVDEAG…VVAAGVRLEQ (192 aa)). Residues Asp-35, Glu-36, and Asp-129 each contribute to the a divalent metal cation site.

Belongs to the RNase HII family. Mn(2+) is required as a cofactor. It depends on Mg(2+) as a cofactor.

Its subcellular location is the cytoplasm. It carries out the reaction Endonucleolytic cleavage to 5'-phosphomonoester.. In terms of biological role, endonuclease that specifically degrades the RNA of RNA-DNA hybrids. In Rhodococcus erythropolis (strain PR4 / NBRC 100887), this protein is Ribonuclease HII.